The following is a 185-amino-acid chain: Calcium and integrin-binding family member 4 (185 aa).

EF-hand domains follow at residues 62–95, 97–132, and 138–174; these read RVNP…FSEQ, CPSL…LLKS, and DLLM…SPDF. Residues aspartate 110, asparagine 112, asparagine 114, and aspartate 121 each coordinate Ca(2+).

Interacts with ITGA2B (via C-terminus cytoplasmic tail region); the interaction is stabilized/increased in a calcium- and magnesium-dependent manner. Expressed weakly in megakaryocytes and endothelial cells.

In Mus musculus (Mouse), this protein is Calcium and integrin-binding family member 4 (Cib4).